Consider the following 681-residue polypeptide: DNA-directed RNA polymerase subunit beta' (681 aa).

Zn(2+)-binding residues include cysteine 69, cysteine 71, cysteine 87, and cysteine 90. Residues aspartate 489, aspartate 491, and aspartate 493 each coordinate Mg(2+).

Belongs to the RNA polymerase beta' chain family. RpoC1 subfamily. In terms of assembly, in plastids the minimal PEP RNA polymerase catalytic core is composed of four subunits: alpha, beta, beta', and beta''. When a (nuclear-encoded) sigma factor is associated with the core the holoenzyme is formed, which can initiate transcription. Mg(2+) serves as cofactor. Zn(2+) is required as a cofactor.

The protein resides in the plastid. The protein localises to the chloroplast. The enzyme catalyses RNA(n) + a ribonucleoside 5'-triphosphate = RNA(n+1) + diphosphate. DNA-dependent RNA polymerase catalyzes the transcription of DNA into RNA using the four ribonucleoside triphosphates as substrates. The sequence is that of DNA-directed RNA polymerase subunit beta' from Atropa belladonna (Belladonna).